Consider the following 215-residue polypeptide: Lysozyme-like protein 5 (215 aa).

The signal sequence occupies residues 1–17; that stretch reads MKHFFITILLFCSVVSA. One can recognise a Ch-type lysozyme domain in the interval 18-215; it reads ARNGIDINSP…GVSVDMNYIP (198 aa). Active-site residues include D23, D113, and E115.

Belongs to the glycosyl hydrolase 25 family.

Functionally, plays a role in resistance to Gram-positive bacteria S.aureus or B.thuringiensis infection. The sequence is that of Lysozyme-like protein 5 from Caenorhabditis elegans.